A 292-amino-acid polypeptide reads, in one-letter code: Ferric aerobactin-binding protein VatD (292 aa).

The signal sequence occupies residues 1–12; sequence MLSAALAFNSYA. Positions 30–292 constitute a Fe/B12 periplasmic-binding domain; that stretch reads KVVALDWVLT…HITGRLTQPQ (263 aa). Desferrioxamine B-binding residues include Trp-61, Arg-77, Tyr-118, Arg-185, Trp-213, Phe-215, Trp-269, and Phe-271.

Belongs to the bacterial solute-binding protein 8 family. The complex is composed of two ATP-binding proteins (VatC), two transmembrane proteins (VatB) and a solute-binding protein (VatD).

It is found in the periplasm. Functionally, part of the ABC transporter complex VatCDB involved in the import of iron(3+)-complexed aerobactin, a citrate-hydroxamate siderophore produced by other bacteria. Binds the iron(3+)-aerobactin complex and transfers it to the membrane-bound permease. Functions in the import of iron(3+)-complexed vulnibactin, a catecholate siderophore synthesized by V.vulnificus, in the absence of FatB. In Vibrio vulnificus, this protein is Ferric aerobactin-binding protein VatD.